Here is a 57-residue protein sequence, read N- to C-terminus: DNA-directed RNA polymerase subunit Rpo6 (57 aa).

This sequence belongs to the archaeal Rpo6/eukaryotic RPB6 RNA polymerase subunit family. As to quaternary structure, part of the RNA polymerase complex.

Its subcellular location is the cytoplasm. The catalysed reaction is RNA(n) + a ribonucleoside 5'-triphosphate = RNA(n+1) + diphosphate. DNA-dependent RNA polymerase (RNAP) catalyzes the transcription of DNA into RNA using the four ribonucleoside triphosphates as substrates. This is DNA-directed RNA polymerase subunit Rpo6 from Thermococcus gammatolerans (strain DSM 15229 / JCM 11827 / EJ3).